We begin with the raw amino-acid sequence, 358 residues long: Peptide chain release factor 1 (358 aa).

Glutamine 237 is modified (N5-methylglutamine). A compositionally biased stretch (basic and acidic residues) spans 291 to 309; it reads EESGYRKLAGHGDRSEKIR. Residues 291 to 313 form a disordered region; the sequence is EESGYRKLAGHGDRSEKIRTYNY.

Belongs to the prokaryotic/mitochondrial release factor family. Post-translationally, methylated by PrmC. Methylation increases the termination efficiency of RF1.

Its subcellular location is the cytoplasm. Peptide chain release factor 1 directs the termination of translation in response to the peptide chain termination codons UAG and UAA. This Mycoplasmopsis agalactiae (strain NCTC 10123 / CIP 59.7 / PG2) (Mycoplasma agalactiae) protein is Peptide chain release factor 1.